The following is a 229-amino-acid chain: PKHD-type hydroxylase BRADO4652 (229 aa).

A Fe2OG dioxygenase domain is found at 78-180 (QIFPPLFNRY…RVASFFWMQS (103 aa)). His-98, Asp-100, and His-161 together coordinate Fe cation. Arg-171 contributes to the 2-oxoglutarate binding site.

Fe(2+) is required as a cofactor. The cofactor is L-ascorbate.

The chain is PKHD-type hydroxylase BRADO4652 from Bradyrhizobium sp. (strain ORS 278).